Reading from the N-terminus, the 640-residue chain is MSARKLQVEIEKTFKKVTDGIAIFDEVYEKLSASNSVSQKEKLEGDLKTQIKKLQRLRDQIKTWASSNDIKDKKALLENRRLIEAKMEEFKAVEREMKIKAFSKEGLSIASKLDPKEKEKQDTIQWISNAVEELERQAELIEAEAESLKATFKRGKKDLSKLSHLSELESRIERHKWHQDKLELIMRRLENSQISPEAVNDIQEDIMYYVECSQSEDFAEDENLYDELNLDEASASYDAERSGRSSSSSHSPSPSASSSSSSENLLQDKAEAEEKVSADASVQDIAEKESLDADKELATNDQEDDEEENQAETQKDGAISNNENMQSEVQTTNPSASTSAVTNITKPTLIQNPSTPLSVSNSKVASPETPNATHTAPKVEMRYASAAAAAAAALAKESPSHHYIMQQVRPETPNSPRLNSTVIQSKWDSLGHTASPKMQTQPVRSVSQSSATTETNVKPTKEENADVPVSSPDYLKDLVNALNTSKEQHKGAIDKEKLTEALNISCVYVPDATDAAKPQYYIPKDPYPVPHYYPQQPLPLFDSSEMTELVDPDTLFYMFYYRPGTYQQYIAGQELKKQSWRFHKKYTTWFQRHEEPKMITDEFESGSYRYFDFEGDWVQRKKADFRFTYQYLEDDDDWTR.

Residues 37 to 162 (VSQKEKLEGD…KRGKKDLSKL (126 aa)) are a coiled coil. The segment at 235-374 (ASYDAERSGR…ASPETPNATH (140 aa)) is disordered. Low complexity predominate over residues 245 to 262 (SSSSSHSPSPSASSSSSS). A phosphoserine mark is found at Ser-248, Ser-249, Ser-251, and Ser-253. Composition is skewed to basic and acidic residues over residues 266–277 (LQDKAEAEEKVS) and 285–298 (IAEKESLDADKELA). The stretch at 287 to 331 (EKESLDADKELATNDQEDDEEENQAETQKDGAISNNENMQSEVQT) forms a coiled coil. Residues 301–310 (DQEDDEEENQ) show a composition bias toward acidic residues. The span at 319–374 (ISNNENMQSEVQTTNPSASTSAVTNITKPTLIQNPSTPLSVSNSKVASPETPNATH) shows a compositional bias: polar residues. A Phosphoserine modification is found at Ser-366. Thr-369 bears the Phosphothreonine mark. Ser-385 is modified (phosphoserine). Residues 432–471 (HTASPKMQTQPVRSVSQSSATTETNVKPTKEENADVPVSS) are disordered. A Phosphothreonine modification is found at Thr-433. Residues Ser-435, Ser-449, and Ser-471 each carry the phosphoserine modification. Residues 436-458 (PKMQTQPVRSVSQSSATTETNVK) are compositionally biased toward polar residues. Tyr-474 carries the phosphotyrosine modification.

The protein belongs to the CNOT2/3/5 family.

The protein resides in the cytoplasm. It localises to the nucleus. Functionally, acts as a component of the CCR4-NOT core complex, which in the nucleus seems to be a general transcription factor, and in the cytoplasm the major mRNA deadenylase involved in mRNA turnover. The NOT protein subcomplex negatively regulates the basal and activated transcription of many genes. Preferentially affects TC-type TATA element-dependent transcription. Could directly or indirectly inhibit component(s) of the general transcription machinery. The chain is General negative regulator of transcription subunit 3 (not3) from Schizosaccharomyces pombe (strain 972 / ATCC 24843) (Fission yeast).